The chain runs to 280 residues: Probable cell division protein WhiA (280 aa).

Positions 246–279 (SLEQIAQFFERKYKVQITRSGIQHLNAKLKKLNQ) form a DNA-binding region, H-T-H motif.

This sequence belongs to the WhiA family.

Its function is as follows. Involved in cell division and chromosome segregation. The polypeptide is Probable cell division protein WhiA (Mycoplasma pneumoniae (strain ATCC 29342 / M129 / Subtype 1) (Mycoplasmoides pneumoniae)).